A 237-amino-acid chain; its full sequence is Large ribosomal subunit protein uL2 (237 aa).

A disordered region spans residues 202–237; that stretch reads FGGGNRKHPGKPTTVSRNAPPGRKVGHIAARRTGKR. Positions 225–237 are enriched in basic residues; it reads KVGHIAARRTGKR.

It belongs to the universal ribosomal protein uL2 family. In terms of assembly, part of the 50S ribosomal subunit. Forms a bridge to the 30S subunit in the 70S ribosome.

Functionally, one of the primary rRNA binding proteins. Required for association of the 30S and 50S subunits to form the 70S ribosome, for tRNA binding and peptide bond formation. It has been suggested to have peptidyltransferase activity; this is somewhat controversial. Makes several contacts with the 16S rRNA in the 70S ribosome. This chain is Large ribosomal subunit protein uL2, found in Methanococcoides burtonii (strain DSM 6242 / NBRC 107633 / OCM 468 / ACE-M).